The sequence spans 93 residues: Small ribosomal subunit protein uS19 (93 aa).

It belongs to the universal ribosomal protein uS19 family.

Protein S19 forms a complex with S13 that binds strongly to the 16S ribosomal RNA. This is Small ribosomal subunit protein uS19 from Desulfitobacterium hafniense (strain Y51).